The following is a 327-amino-acid chain: Beta-1,4-galactosyltransferase 7 (327 aa).

The Cytoplasmic portion of the chain corresponds to 1–30; it reads MLPSRRKAAQLPWEDGRARLLPGGLRRKCS. The chain crosses the membrane as a helical; Signal-anchor for type II membrane protein span at residues 31 to 51; the sequence is IFHLFIAFLLLVFFSLLWLQL. The Lumenal portion of the chain corresponds to 52–327; sequence SCSGDMAQVT…KTATPWCIFG (276 aa). Residues 61–88 form a disordered region; it reads TRGQGQETSGPPRACPPEPPPEHWEEDE. UDP-alpha-D-galactose contacts are provided by residues 100 to 104 and 139 to 141; these read PFRER and FNR. N154 carries an N-linked (GlcNAc...) asparagine glycan. UDP-alpha-D-galactose-binding positions include 164–165, Y194, and W224; that span reads VD. Position 165 (D165) interacts with Mn(2+). 226 to 229 is a binding site for N-acetyl-D-glucosamine; the sequence is REDD. A Mn(2+)-binding site is contributed by H257. Residues 257 to 259 and R266 contribute to the UDP-alpha-D-galactose site; that span reads HLH.

Belongs to the glycosyltransferase 7 family. The cofactor is Mn(2+).

The protein resides in the golgi apparatus. It is found in the golgi stack membrane. It carries out the reaction 3-O-(beta-D-xylosyl)-L-seryl-[protein] + UDP-alpha-D-galactose = 3-O-(beta-D-galactosyl-(1-&gt;4)-beta-D-xylosyl)-L-seryl-[protein] + UDP + H(+). It participates in protein modification; protein glycosylation. Its function is as follows. Required for the biosynthesis of the tetrasaccharide linkage region of proteoglycans, especially for small proteoglycans in skin fibroblasts. The protein is Beta-1,4-galactosyltransferase 7 (B4galt7) of Mus musculus (Mouse).